The following is a 447-amino-acid chain: Probable rhamnogalacturonase C (447 aa).

The signal sequence occupies residues 1–19; the sequence is MQVKLFYTLALWAPILVSA. Asn37 and Asn65 each carry an N-linked (GlcNAc...) asparagine glycan. Cys40 and Cys66 are disulfide-bonded. Catalysis depends on Asp217, which acts as the Proton donor. An intrachain disulfide couples Cys219 to Cys236. Asn237 and Asn252 each carry an N-linked (GlcNAc...) asparagine glycan. His291 is a catalytic residue. Asn316 carries N-linked (GlcNAc...) asparagine glycosylation. Cystine bridges form between Cys338–Cys344 and Cys366–Cys375.

Belongs to the glycosyl hydrolase 28 family.

It is found in the secreted. In terms of biological role, pectinolytic enzymes consist of four classes of enzymes: pectine lyase, polygalacturonase, pectin methylesterase and rhamnogalacturonase. Hydrolyzes alpha-D-galacturonopyranosyl-(1,2)-alpha-L-rhamnopyranosyl linkages in the backbone of the hairy regions of pectins. The chain is Probable rhamnogalacturonase C (rhgC) from Aspergillus flavus (strain ATCC 200026 / FGSC A1120 / IAM 13836 / NRRL 3357 / JCM 12722 / SRRC 167).